We begin with the raw amino-acid sequence, 91 residues long: MSEEDVKSHKIEFPCEDYPIKVIGDTVVGFRDTVIEILSKHAKVDLSTLAERQSKEGKYTTVQLHIVAESENQLHDINSALRATGIVKMVL.

This sequence belongs to the UPF0250 family.

This chain is UPF0250 protein PSEEN4821, found in Pseudomonas entomophila (strain L48).